The following is a 399-amino-acid chain: Cell division protein DivIB (399 aa).

2 disordered regions span residues 1–23 (MSKD…SEWQ) and 35–119 (EEEA…ATKE). Residues 1 to 133 (MSKDKKNEDK…AKIPGIHILR (133 aa)) are Cytoplasmic-facing. Composition is skewed to basic and acidic residues over residues 35-65 (EEEA…KQDQ) and 75-119 (ESAK…ATKE). Residues 134-154 (AFTILFPSLLLLFVSAYLLSP) form a helical membrane-spanning segment. Residues 155–399 (YATMKDIRVE…NQTTQRSSRR (245 aa)) are Extracellular-facing. The POTRA domain maps to 156 to 226 (ATMKDIRVEG…TKFTIKVKEY (71 aa)). Residues 364 to 388 (KAKQEAKEAEKKQEEEQKKQEEESN) show a composition bias toward basic and acidic residues. Positions 364 to 399 (KAKQEAKEAEKKQEEEQKKQEEESNRNQTTQRSSRR) are disordered. Positions 389-399 (RNQTTQRSSRR) are enriched in polar residues.

It belongs to the FtsQ/DivIB family. DivIB subfamily.

It localises to the cell membrane. Its function is as follows. Cell division protein that may be involved in stabilizing or promoting the assembly of the division complex. This is Cell division protein DivIB from Streptococcus pneumoniae serotype 4 (strain ATCC BAA-334 / TIGR4).